A 648-amino-acid polypeptide reads, in one-letter code: DNA ligase (648 aa).

NAD(+) contacts are provided by residues 63–67 and 105–106; these read DILYD and ST. The active-site N6-AMP-lysine intermediate is Lys143. NAD(+) is bound by residues Arg159, Glu190, and Lys302. Zn(2+) is bound by residues Cys390, Cys393, Cys406, and Cys412. The BRCT domain maps to 570 to 648; sequence SLASPLTGKI…SEQEYLDLIS (79 aa).

Belongs to the NAD-dependent DNA ligase family. LigA subfamily. Mg(2+) is required as a cofactor. Requires Mn(2+) as cofactor.

The enzyme catalyses NAD(+) + (deoxyribonucleotide)n-3'-hydroxyl + 5'-phospho-(deoxyribonucleotide)m = (deoxyribonucleotide)n+m + AMP + beta-nicotinamide D-nucleotide.. DNA ligase that catalyzes the formation of phosphodiester linkages between 5'-phosphoryl and 3'-hydroxyl groups in double-stranded DNA using NAD as a coenzyme and as the energy source for the reaction. It is essential for DNA replication and repair of damaged DNA. The chain is DNA ligase from Shewanella baltica (strain OS155 / ATCC BAA-1091).